The following is a 194-amino-acid chain: NADH-quinone oxidoreductase subunit B (194 aa).

A disordered region spans residues 1 to 26; sequence MGLTPSATKPEIAQAPQGIVDPSTGR. [4Fe-4S] cluster contacts are provided by Cys-73, Cys-74, Cys-138, and Cys-168.

This sequence belongs to the complex I 20 kDa subunit family. As to quaternary structure, NDH-1 is composed of 14 different subunits. Subunits NuoB, C, D, E, F, and G constitute the peripheral sector of the complex. [4Fe-4S] cluster is required as a cofactor.

The protein localises to the cell inner membrane. It carries out the reaction a quinone + NADH + 5 H(+)(in) = a quinol + NAD(+) + 4 H(+)(out). Functionally, NDH-1 shuttles electrons from NADH, via FMN and iron-sulfur (Fe-S) centers, to quinones in the respiratory chain. The immediate electron acceptor for the enzyme in this species is believed to be ubiquinone. Couples the redox reaction to proton translocation (for every two electrons transferred, four hydrogen ions are translocated across the cytoplasmic membrane), and thus conserves the redox energy in a proton gradient. The sequence is that of NADH-quinone oxidoreductase subunit B from Xanthobacter autotrophicus (strain ATCC BAA-1158 / Py2).